The sequence spans 246 residues: UPF0736 protein Aflv_2136 (246 aa).

Belongs to the UPF0736 family.

The protein is UPF0736 protein Aflv_2136 of Anoxybacillus flavithermus (strain DSM 21510 / WK1).